The primary structure comprises 113 residues: MARVTVEDCVDKISNRFDLVLMAAQRARQISGGAELTIDRDRDKNPVVALREIAEQTVTPEELHEAVVSTLQRVRVDDDDAPDEIGSLAASAEALRLTAAAPPRNQNIGGDYE.

Belongs to the RNA polymerase subunit omega family. The RNAP catalytic core consists of 2 alpha, 1 beta, 1 beta' and 1 omega subunit. When a sigma factor is associated with the core the holoenzyme is formed, which can initiate transcription.

The enzyme catalyses RNA(n) + a ribonucleoside 5'-triphosphate = RNA(n+1) + diphosphate. Functionally, promotes RNA polymerase assembly. Latches the N- and C-terminal regions of the beta' subunit thereby facilitating its interaction with the beta and alpha subunits. In Rhizorhabdus wittichii (strain DSM 6014 / CCUG 31198 / JCM 15750 / NBRC 105917 / EY 4224 / RW1) (Sphingomonas wittichii), this protein is DNA-directed RNA polymerase subunit omega.